The primary structure comprises 163 residues: MQHYVTPDLCDAYPDLVQVLEPMFSNFGGRDSFGGQIVTIKCFEDNSRVKEQVELDGKGKVLVVDGGGSLRCALLGDMLAEKAAKNGWEGLVIYGCVRDVDVLIQTSVGVQALASHPMKTDKRGIGDLNVAVTFAGVTFRPGEYVYADNNGVIVSPSPLEMPQ.

Substrate-binding positions include 76-79 (GDML) and R98. Residue D99 coordinates a divalent metal cation.

Belongs to the class II aldolase/RraA-like family. As to quaternary structure, homotrimer. A divalent metal cation serves as cofactor.

It carries out the reaction 4-hydroxy-4-methyl-2-oxoglutarate = 2 pyruvate. It catalyses the reaction oxaloacetate + H(+) = pyruvate + CO2. Catalyzes the aldol cleavage of 4-hydroxy-4-methyl-2-oxoglutarate (HMG) into 2 molecules of pyruvate. Also contains a secondary oxaloacetate (OAA) decarboxylase activity due to the common pyruvate enolate transition state formed following C-C bond cleavage in the retro-aldol and decarboxylation reactions. This is Putative 4-hydroxy-4-methyl-2-oxoglutarate aldolase from Pseudomonas putida (strain W619).